The chain runs to 52 residues: Thiocillin (52 aa).

A propeptide spanning residues 1–38 is cleaved from the precursor; sequence MSEIKKALNTLEIEDFDAIEMVDVDAMPENEALEIMGA. Residues 39-40 constitute a cross-link (thiazole-4-carboxylic acid (Ser-Cys)); that stretch reads SC. Positions 39–47 form a cross-link, pyridine-2,5-dicarboxylic acid (Ser-Cys) (with S-48); the sequence is SCTTCVCTC. The segment at residues 39–48 is a cross-link (pyridine-2,5-dicarboxylic acid (Ser-Ser) (with C-47)); that stretch reads SCTTCVCTCS. T42 is subject to (Z)-2,3-didehydrobutyrine. A cross-link (thiazole-4-carboxylic acid (Thr-Cys)) is located at residues 42–43; the sequence is TC. The residue at position 44 (V44) is a 3-hydroxyvaline (Val); partial. Positions 44–45 form a cross-link, thiazole-4-carboxylic acid (Val-Cys); that stretch reads VC. T46 carries the O-methylthreonine; partial modification. Positions 46–47 form a cross-link, thiazole-4-carboxylic acid (Thr-Cys); it reads TC. Positions 48–49 form a cross-link, thiazole-4-carboxylic acid (Ser-Cys); sequence SC. A cross-link (thiazole-4-carboxylic acid (Cys-Cys)) is located at residues 49–50; it reads CC. T51 carries the post-translational modification (Z)-2,3-didehydrobutyrine. T52 bears the 1-amino-2-propanone; alternate mark. Residue T52 is modified to Decarboxylated threonine; alternate.

The protein belongs to the thiocillin family. In terms of processing, maturation of thiazole and oxazole containing antibiotics involves the enzymatic condensation of a Cys, Ser or Thr with the alpha-carbonyl of the preceding amino acid to form a thioether or ether bond, then dehydration to form a double bond with the alpha-amino nitrogen. Thiazoline or oxazoline ring are dehydrogenated to form thiazole or oxazole rings. Maturation of pyridinyl containing antibiotics involves the cross-linking of a Ser and a Cys-Ser pair usually separated by 7 or 8 residues along the peptide chain. The Ser residues are dehydrated to didehydroalanines, then bonded between their beta carbons. The alpha carbonyl of the Cys condenses with alpha carbon of the first Ser to form a pyridinyl ring. The ring may be multiply dehydrogenated to form a pyridine ring with loss of the amino nitrogen of the first Ser. Post-translationally, the 8 possible modification isomers, differing in the presence of modifications at three positions, have been characterized in PubMed:19196969. Val-44 is modified to 3-hydroxyvaline in forms thiocillin I, thiocillin II, YM-266183, and YM-266184. Thr-46 is modified to O-methylthreonine in forms thiocillin II, thiocillin III, thiocillin IV, and YM-266184. Thr-52 is decarboxylated to (R)-1-aminopropan-2-ol in forms micrococcin P1, thiocillin I, thiocillin II, and thiocillin III. Thr-52 is decarboxylated and oxidized to 1-amino-2-propanone in forms micrococcin P2, YM-266183, YM-266184. and thiocillin IV. In terms of processing, the structure of 2,3-didehydrobutyrines is not discussed in PubMed:19196969. However, in Fig. 3 the residues are diagrammed as Z-isomers.

The protein resides in the secreted. Functionally, has bacteriocidal activity against Gram-positive bacteria, but not against Gram-negative bacteria. Inhibits bacterial protein biosynthesis by acting on the elongation factor Tu (EF-Tu). This Bacillus cereus (strain ATCC 14579 / DSM 31 / CCUG 7414 / JCM 2152 / NBRC 15305 / NCIMB 9373 / NCTC 2599 / NRRL B-3711) protein is Thiocillin.